Consider the following 316-residue polypeptide: tRNA dimethylallyltransferase (316 aa).

12–19 (GPTASGKT) contributes to the ATP binding site. Residue 14-19 (TASGKT) coordinates substrate. Interaction with substrate tRNA regions lie at residues 37–40 (DSAL) and 161–165 (QRILR).

The protein belongs to the IPP transferase family. In terms of assembly, monomer. Requires Mg(2+) as cofactor.

It carries out the reaction adenosine(37) in tRNA + dimethylallyl diphosphate = N(6)-dimethylallyladenosine(37) in tRNA + diphosphate. Catalyzes the transfer of a dimethylallyl group onto the adenine at position 37 in tRNAs that read codons beginning with uridine, leading to the formation of N6-(dimethylallyl)adenosine (i(6)A). This is tRNA dimethylallyltransferase from Idiomarina loihiensis (strain ATCC BAA-735 / DSM 15497 / L2-TR).